Reading from the N-terminus, the 382-residue chain is Sialidase (382 aa).

Residue Arg37 participates in substrate binding. An intrachain disulfide couples Cys42 to Cys103. The active-site Proton acceptor is the Asp62. BNR repeat units follow at residues 71–82, 145–156, and 210–220; these read ARSTDGGKTWNK, YKSTDDGVTFSK, and IYSTDGITWSL. Arg246 contributes to the substrate binding site. Residues 254–265 form a BNR 4 repeat; that stretch reads FETKDFGKTWTE. Arg309 serves as a coordination point for substrate. The Nucleophile role is filled by Tyr342. Residue Glu361 is part of the active site.

It belongs to the glycosyl hydrolase 33 family. In terms of assembly, monomer.

It carries out the reaction Hydrolysis of alpha-(2-&gt;3)-, alpha-(2-&gt;6)-, alpha-(2-&gt;8)- glycosidic linkages of terminal sialic acid residues in oligosaccharides, glycoproteins, glycolipids, colominic acid and synthetic substrates.. Cleaves the terminal sialic acid (N-acetyl neuraminic acid) from carbohydrate chains in glycoproteins providing free sialic acid which can be used as carbon and energy sources. Sialidases have been suggested to be pathogenic factors in microbial infections. The sequence is that of Sialidase (nanH) from Salmonella typhimurium (strain LT2 / SGSC1412 / ATCC 700720).